Consider the following 436-residue polypeptide: Capsid protein (436 aa).

A disordered region spans residues 326 to 370 (RDYSQRGTVPTAPSRQQVESEARAPYPKTNRPPTTADILPGDLDS). A compositionally biased stretch (polar residues) spans 330–344 (QRGTVPTAPSRQQVE).

The protein belongs to the anelloviridae capsid protein family.

The protein localises to the virion. In terms of biological role, self-assembles to form an icosahedral capsid with a T=1 symmetry, about 30 nm in diameter, and consisting of 60 capsid proteins. The capsid encapsulates the genomic DNA. Capsid protein is involved in attachment and entry into the host cell. This Torque teno felis virus (isolate Fc-TTV4) protein is Capsid protein.